An 87-amino-acid chain; its full sequence is Small ribosomal subunit protein bS20 (87 aa).

Positions 1-20 (MANHKSAEKRARQTIKKTER) are disordered.

The protein belongs to the bacterial ribosomal protein bS20 family.

Binds directly to 16S ribosomal RNA. This Campylobacter jejuni subsp. jejuni serotype O:2 (strain ATCC 700819 / NCTC 11168) protein is Small ribosomal subunit protein bS20.